Here is a 107-residue protein sequence, read N- to C-terminus: Phosphoribosyl-ATP pyrophosphatase (107 aa).

The protein belongs to the PRA-PH family.

The protein resides in the cytoplasm. The catalysed reaction is 1-(5-phospho-beta-D-ribosyl)-ATP + H2O = 1-(5-phospho-beta-D-ribosyl)-5'-AMP + diphosphate + H(+). Its pathway is amino-acid biosynthesis; L-histidine biosynthesis; L-histidine from 5-phospho-alpha-D-ribose 1-diphosphate: step 2/9. This Neisseria gonorrhoeae (strain ATCC 700825 / FA 1090) protein is Phosphoribosyl-ATP pyrophosphatase.